The sequence spans 169 residues: Spore protein SP21 (169 aa).

2 disordered regions span residues 1–21 (MADL…REWD) and 150–169 (QPKR…HIKA). Residues 47 to 159 (QGPPAFVPAF…QPKRIQVASS (113 aa)) enclose the sHSP domain.

It belongs to the small heat shock protein (HSP20) family.

May stabilize cellular components during stress and spore formation. The polypeptide is Spore protein SP21 (hspA) (Stigmatella aurantiaca (strain DW4/3-1)).